The chain runs to 498 residues: ATP synthase subunit beta, chloroplastic (498 aa).

Residue 172 to 179 (GGAGVGKT) coordinates ATP.

It belongs to the ATPase alpha/beta chains family. As to quaternary structure, F-type ATPases have 2 components, CF(1) - the catalytic core - and CF(0) - the membrane proton channel. CF(1) has five subunits: alpha(3), beta(3), gamma(1), delta(1), epsilon(1). CF(0) has four main subunits: a(1), b(1), b'(1) and c(9-12).

The protein resides in the plastid. The protein localises to the chloroplast thylakoid membrane. The enzyme catalyses ATP + H2O + 4 H(+)(in) = ADP + phosphate + 5 H(+)(out). In terms of biological role, produces ATP from ADP in the presence of a proton gradient across the membrane. The catalytic sites are hosted primarily by the beta subunits. The chain is ATP synthase subunit beta, chloroplastic from Phormium tenax (New Zealand flax).